Consider the following 393-residue polypeptide: MRYLTAGESHGPQLTTIIEGLPSLLPITAEKINHDLKRRQGGHGRGRRMQIETDTVEIVAGVRHGQTLGSPVALVVANDDWKHWTKIMGAEPLAEDVNPEDIKRQISRPRPGHADLVGGMKYGHRDLRNVLERSSARETTVRVAVGSVAKALLNELGISIVAHVTEIVGIKADTSLVEGKTVDEIRAIVEADPCYCVDPVASAKMVDAIDEAKKAGDSIGGVVEVIVEGMPAGIGSYVHYDRKLDAKLAAAMLSINAFKGVEFGLGFEMARRKGSEVHDEIIWTEEEGYTRATNRLGGLEGGMSTGMPIVVRGVMKPIPTLYKPLQSVDIETKEPFKASVERSDSCAVPAASVVAEHVIAWEIATVILEQFHSDQLPQLKAQIDEHRQYTKGF.

2 residues coordinate NADP(+): Arg-39 and Arg-45. Residues 133–135, 256–257, Gly-301, 316–320, and Arg-342 contribute to the FMN site; these read RSS, NA, and KPIPT.

It belongs to the chorismate synthase family. As to quaternary structure, homotetramer. Requires FMNH2 as cofactor.

It catalyses the reaction 5-O-(1-carboxyvinyl)-3-phosphoshikimate = chorismate + phosphate. The protein operates within metabolic intermediate biosynthesis; chorismate biosynthesis; chorismate from D-erythrose 4-phosphate and phosphoenolpyruvate: step 7/7. In terms of biological role, catalyzes the anti-1,4-elimination of the C-3 phosphate and the C-6 proR hydrogen from 5-enolpyruvylshikimate-3-phosphate (EPSP) to yield chorismate, which is the branch point compound that serves as the starting substrate for the three terminal pathways of aromatic amino acid biosynthesis. This reaction introduces a second double bond into the aromatic ring system. This is Chorismate synthase from Lysinibacillus sphaericus (strain C3-41).